The sequence spans 732 residues: Prolyl tripeptidyl peptidase (732 aa).

The signal sequence occupies residues 1–24 (MKKTIFQQLFLSVCALTVALPCSA). Catalysis depends on charge relay system residues serine 603, aspartate 678, and histidine 710.

Belongs to the peptidase S9B family. Post-translationally, the N-terminus is blocked.

The catalysed reaction is Hydrolysis of Xaa-Xaa-Pro-|-Yaa- releasing the N-terminal tripeptide of a peptide with Pro as the third residue (position P1) and where Yaa is not proline.. Its activity is regulated as follows. Strongly inhibited by diisopropyl fluorophosphate and Pefabloc. Weakly inhibited by 3,4-dichloroisocumarin. Not inhibited by phenylmethylsulfonyl fluoride, leupeptin, antipain or prolinal. Activated by iodoacetamide. Functionally, serine proteinase. Releases tripeptides from the free amino terminus of proteins. Has a requirement for Pro in the P1 position, but is inactivated by Pro in the P1' position. The chain is Prolyl tripeptidyl peptidase from Porphyromonas gingivalis (strain ATCC BAA-308 / W83).